Here is a 590-residue protein sequence, read N- to C-terminus: Pentatricopeptide repeat-containing protein At2g46050, mitochondrial (590 aa).

The transit peptide at 1–109 (MRFTFLRSTR…RNIVTWNILI (109 aa)) directs the protein to the mitochondrion. 11 PPR repeats span residues 141–175 (DHVSFMGLIRLCTDSTNMKAGIQLHCLMVKQGLES), 176–206 (SCFPSTSLVHFYGKCGLIVEARRVFEAVLDR), 207–241 (DLVLWNALVSSYVLNGMIDEAFGLLKLMGSDKNRF), 244–266 (DYFTFSSLLSACRIEQGKQIHAI), 275–305 (DIPVATALLNMYAKSNHLSDARECFESMVVR), 306–340 (NVVSWNAMIVGFAQNGEGREAMRLFGQMLLENLQP), 341–375 (DELTFASVLSSCAKFSAIWEIKQVQAMVTKKGSAD), 376–406 (FLSVANSLISSYSRNGNLSEALLCFHSIREP), 407–437 (DLVSWTSVIGALASHGFAEESLQMFESMLQK), 441–471 (DKITFLEVLSACSHGGLVQEGLRCFKRMTEF), and 477–507 (EDEHYTCLIDLLGRAGFIDEASDVLNSMPTE). The interval 512 to 588 (ALAAFTGGCN…TPGCSWLGDY (77 aa)) is type E motif.

It belongs to the PPR family. PCMP-E subfamily.

It localises to the mitochondrion. The chain is Pentatricopeptide repeat-containing protein At2g46050, mitochondrial (PCMP-E39) from Arabidopsis thaliana (Mouse-ear cress).